Reading from the N-terminus, the 415-residue chain is MDTFSYRDAELFAEGVALSRIAERFGTPTYVYSRAHIEAQYRAYADALAGMPHLVCFAVKANSNLGVLNVLARLGAGFDIVSRGELERVLAAGGDPAKVVFSGVGKTRDDMRRALEVGVHCFNVESGEELERLQRVAAELGVKAPVSLRVNPDVDAQTHPYISTGLKENKFGIAIDEAEAVYARAAELDHLEVIGVDCHIGSQLTQLEPFLDALERLLGLVDRLAGKGIGIRHLDLGGGLGVRYRDEQPPLAGDYIRAIRERLHGRDLTLVFEPGRSIVANAGVLLTRVEYLKHTEHKDFAIVDAAMNDLIRPALYQAWMDVQAVRPRDAAPRRYDLVGPICETGDFLAKDRDLALAEGDLLAVRSAGAYGFVMSSNYNTRGRAAEVLVDGEQTHEVRRRETVQELYAGESLLPQ.

The residue at position 60 (lysine 60) is an N6-(pyridoxal phosphate)lysine. Residues glycine 239 and 273 to 276 (EPGR) each bind pyridoxal 5'-phosphate. Substrate is bound by residues arginine 276, arginine 312, and tyrosine 316. Residue cysteine 342 is the Proton donor of the active site. Positions 343 and 370 each coordinate substrate. Residue tyrosine 370 participates in pyridoxal 5'-phosphate binding.

Belongs to the Orn/Lys/Arg decarboxylase class-II family. LysA subfamily. In terms of assembly, homodimer. Pyridoxal 5'-phosphate is required as a cofactor.

The enzyme catalyses meso-2,6-diaminopimelate + H(+) = L-lysine + CO2. The protein operates within amino-acid biosynthesis; L-lysine biosynthesis via DAP pathway; L-lysine from DL-2,6-diaminopimelate: step 1/1. Its function is as follows. Specifically catalyzes the decarboxylation of meso-diaminopimelate (meso-DAP) to L-lysine. The polypeptide is Diaminopimelate decarboxylase (Pseudomonas aeruginosa (strain ATCC 15692 / DSM 22644 / CIP 104116 / JCM 14847 / LMG 12228 / 1C / PRS 101 / PAO1)).